Reading from the N-terminus, the 1944-residue chain is Anaphase-promoting complex subunit 1 (1944 aa).

Phosphoserine is present on residues serine 51, serine 60, serine 202, and serine 286. The residue at position 291 (threonine 291) is a Phosphothreonine. Residues leucine 305–serine 343 are disordered. 7 positions are modified to phosphoserine: serine 313, serine 341, serine 343, serine 355, serine 362, serine 373, and serine 377. Residues serine 323–serine 343 show a composition bias toward low complexity. The disordered stretch occupies residues serine 373–leucine 396. A compositionally biased stretch (low complexity) spans serine 384–serine 394. Threonine 537 is modified (phosphothreonine). Phosphoserine occurs at positions 547 and 555. Residue tyrosine 571 is modified to Phosphotyrosine. Phosphoserine is present on residues serine 686, serine 688, and serine 916. The disordered stretch occupies residues lysine 994 to methionine 1016. Over residues valine 998–threonine 1007 the composition is skewed to polar residues. 4 PC repeats span residues alanine 1297 to leucine 1325, glycine 1366 to leucine 1404, glycine 1467 to alanine 1501, and leucine 1520 to tyrosine 1552.

This sequence belongs to the APC1 family. In terms of assembly, the mammalian APC/C is composed at least of 14 distinct subunits ANAPC1, ANAPC2, CDC27/APC3, ANAPC4, ANAPC5, CDC16/APC6, ANAPC7, CDC23/APC8, ANAPC10, ANAPC11, CDC26/APC12, ANAPC13, ANAPC15 and ANAPC16 that assemble into a complex of at least 19 chains with a combined molecular mass of around 1.2 MDa; APC/C interacts with FZR1 and FBXO5. In terms of processing, phosphorylated. Phosphorylation on Ser-355 occurs specifically during mitosis.

It functions in the pathway protein modification; protein ubiquitination. In terms of biological role, component of the anaphase promoting complex/cyclosome (APC/C), a cell cycle-regulated E3 ubiquitin ligase that controls progression through mitosis and the G1 phase of the cell cycle. The APC/C complex acts by mediating ubiquitination and subsequent degradation of target proteins: it mainly mediates the formation of 'Lys-11'-linked polyubiquitin chains and, to a lower extent, the formation of 'Lys-48'- and 'Lys-63'-linked polyubiquitin chains. The APC/C complex catalyzes assembly of branched 'Lys-11'-/'Lys-48'-linked branched ubiquitin chains on target proteins. This is Anaphase-promoting complex subunit 1 (ANAPC1) from Homo sapiens (Human).